Reading from the N-terminus, the 396-residue chain is Acetate kinase (396 aa).

Asn8 contacts Mg(2+). An ATP-binding site is contributed by Lys15. A substrate-binding site is contributed by Arg89. Asp146 serves as the catalytic Proton donor/acceptor. ATP-binding positions include 206 to 210 (HLGNG), 280 to 282 (DMR), and 328 to 332 (GVGEN). Residue Glu382 coordinates Mg(2+).

The protein belongs to the acetokinase family. Homodimer. It depends on Mg(2+) as a cofactor. Mn(2+) serves as cofactor.

It is found in the cytoplasm. It catalyses the reaction acetate + ATP = acetyl phosphate + ADP. It participates in metabolic intermediate biosynthesis; acetyl-CoA biosynthesis; acetyl-CoA from acetate: step 1/2. In terms of biological role, catalyzes the formation of acetyl phosphate from acetate and ATP. Can also catalyze the reverse reaction. The polypeptide is Acetate kinase (Clavibacter sepedonicus (Clavibacter michiganensis subsp. sepedonicus)).